Reading from the N-terminus, the 535-residue chain is Zinc finger protein squeeze (535 aa).

Composition is skewed to low complexity over residues 70-97 (MVME…HPPQ) and 131-142 (SSASGSGSNGSS). The interval 70 to 157 (MVMEQQPHPD…RRGDGDQAKP (88 aa)) is disordered. The segment covering 145–156 (EESRRGDGDQAK) has biased composition (basic and acidic residues). 5 consecutive C2H2-type zinc fingers follow at residues 158-180 (YKCG…TRIH), 186-208 (YRCE…IRTH), 214-238 (YKCR…SRCH), 244-266 (FKCN…IPKH), and 275-297 (HICN…LQKH). Thr395 carries the post-translational modification Phosphothreonine. Phosphoserine occurs at positions 399 and 401. The disordered stretch occupies residues 417 to 475 (TPQHHLQQQQQQQQQQQAQQQQQAQHQPSPGPGNSAFTPLSATVAPPPHLQQHRGPPGS). Positions 419–443 (QHHLQQQQQQQQQQQAQQQQQAQHQ) are enriched in low complexity. The residue at position 475 (Ser475) is a Phosphoserine. A phosphotyrosine mark is found at Tyr479 and Tyr481.

Belongs to the krueppel C2H2-type zinc-finger protein family. As to quaternary structure, interacts with nab; which acts as a coactivator. Interacts with ap. As to expression, largely restricted to subsets of cells in the CNS throughout embryonic and first instar larval (L1) development. Expressed in a population of lateral interneurons, primarily projecting axons in the anterior and posterior commissures. Overlaps with ap within the thoracic ap cluster. By stage 17, it is restricted to 2 neurons within the ap-cluster, with one neuron typically continuing to display higher levels of expression. Selectively expressed at higher levels within the FMRFa Tv neurons. Expressed in all leucokinergic cells.

It localises to the nucleus. Transcription factor involved in neuronal fate specification. First required in embryonic CNS development to define the number of cells that express apterous (ap) in the ap thoracic cluster of interneurons. Later on, it plays a central role in the combinatorial code of transcription factors that specifies the fate of the Tv neuron in the ap cluster by participating in the transcription regulation of FMRFa in Tv cells. Also required for projection neuron dendritic targeting. This Drosophila melanogaster (Fruit fly) protein is Zinc finger protein squeeze (sqz).